The chain runs to 84 residues: GTP cyclohydrolase 1 feedback regulatory protein (84 aa).

The protein belongs to the GFRP family. In terms of assembly, homopentamer. Forms a complex with GCH1 where a GCH1 homodecamer is sandwiched by two GFRP homopentamers.

It localises to the nucleus. The protein resides in the nucleus membrane. It is found in the cytoplasm. The protein localises to the cytosol. Mediates tetrahydrobiopterin inhibition of GTP cyclohydrolase 1. This chain is GTP cyclohydrolase 1 feedback regulatory protein (gchfr), found in Xenopus laevis (African clawed frog).